The following is a 284-amino-acid chain: Shikimate dehydrogenase (NADP(+)) (284 aa).

Shikimate is bound by residues 20–22 (SIS) and Ser-67. The active-site Proton acceptor is Lys-71. Position 83 (Asp-83) interacts with NADP(+). 2 residues coordinate shikimate: Asn-92 and Asp-107. NADP(+)-binding positions include 129–133 (GAGGA) and Ile-227. Tyr-229 contributes to the shikimate binding site. NADP(+) is bound at residue Gly-250.

The protein belongs to the shikimate dehydrogenase family. As to quaternary structure, homodimer.

It carries out the reaction shikimate + NADP(+) = 3-dehydroshikimate + NADPH + H(+). It participates in metabolic intermediate biosynthesis; chorismate biosynthesis; chorismate from D-erythrose 4-phosphate and phosphoenolpyruvate: step 4/7. Involved in the biosynthesis of the chorismate, which leads to the biosynthesis of aromatic amino acids. Catalyzes the reversible NADPH linked reduction of 3-dehydroshikimate (DHSA) to yield shikimate (SA). In Streptococcus pneumoniae (strain Taiwan19F-14), this protein is Shikimate dehydrogenase (NADP(+)).